Consider the following 685-residue polypeptide: Methionine--tRNA ligase (685 aa).

The short motif at 15 to 25 (PYANGPIHLGH) is the 'HIGH' region element. Residues Cys-146, Cys-149, Cys-159, and Cys-162 each coordinate Zn(2+). The 'KMSKS' region signature appears at 331-335 (KMSKS). Lys-334 provides a ligand contact to ATP. Positions 583 to 685 (DFAKMDLRVA…AGVKAGSRVK (103 aa)) constitute a tRNA-binding domain.

It belongs to the class-I aminoacyl-tRNA synthetase family. MetG type 1 subfamily. In terms of assembly, homodimer. Zn(2+) serves as cofactor.

It localises to the cytoplasm. The enzyme catalyses tRNA(Met) + L-methionine + ATP = L-methionyl-tRNA(Met) + AMP + diphosphate. In terms of biological role, is required not only for elongation of protein synthesis but also for the initiation of all mRNA translation through initiator tRNA(fMet) aminoacylation. In Actinobacillus succinogenes (strain ATCC 55618 / DSM 22257 / CCUG 43843 / 130Z), this protein is Methionine--tRNA ligase.